The following is a 466-amino-acid chain: Ribulose bisphosphate carboxylase large chain (466 aa).

Residue lysine 5 is modified to N6,N6,N6-trimethyllysine. The substrate site is built by asparagine 114 and threonine 164. Lysine 166 functions as the Proton acceptor in the catalytic mechanism. Lysine 168 serves as a coordination point for substrate. Lysine 192, aspartate 194, and glutamate 195 together coordinate Mg(2+). Residue lysine 192 is modified to N6-carboxylysine. The Proton acceptor role is filled by histidine 285. Residues arginine 286, histidine 318, and serine 370 each coordinate substrate.

This sequence belongs to the RuBisCO large chain family. Type I subfamily. In terms of assembly, heterohexadecamer of 8 large chains and 8 small chains; disulfide-linked. The disulfide link is formed within the large subunit homodimers. Requires Mg(2+) as cofactor. In terms of processing, the disulfide bond which can form in the large chain dimeric partners within the hexadecamer appears to be associated with oxidative stress and protein turnover.

The protein resides in the plastid. The protein localises to the chloroplast. The catalysed reaction is 2 (2R)-3-phosphoglycerate + 2 H(+) = D-ribulose 1,5-bisphosphate + CO2 + H2O. The enzyme catalyses D-ribulose 1,5-bisphosphate + O2 = 2-phosphoglycolate + (2R)-3-phosphoglycerate + 2 H(+). Its function is as follows. RuBisCO catalyzes two reactions: the carboxylation of D-ribulose 1,5-bisphosphate, the primary event in carbon dioxide fixation, as well as the oxidative fragmentation of the pentose substrate in the photorespiration process. Both reactions occur simultaneously and in competition at the same active site. The polypeptide is Ribulose bisphosphate carboxylase large chain (Oxalis dillenii (Gray-green wood sorrel)).